The following is a 1447-amino-acid chain: Calcium-dependent secretion activator (1447 aa).

Residues 1–15 (MIDPSSSEEEGEDDA) show a composition bias toward acidic residues. Disordered regions lie at residues 1–35 (MIDP…TSAV) and 101–163 (DTGN…EEEE). 2 stretches are compositionally biased toward polar residues: residues 18–32 (NVSS…TKGT) and 111–126 (GIPS…QSVG). The segment covering 127–144 (SSRANSLPRPLSPSPSLT) has biased composition (low complexity). The segment covering 145–163 (SEKHETAEPHGKHEREEEE) has biased composition (basic and acidic residues). Positions 417–547 (SKYGLQKLKR…PLSSKSPEWH (131 aa)) constitute a C2 domain. The region spanning 573 to 683 (NMKHCGYLYA…WVMAMYRATG (111 aa)) is the PH domain. The MHD1 domain maps to 970-1157 (VDMDRVLSEQ…DMIEQCIQRT (188 aa)). Residues 1386–1395 (REGEEEDNGD) are compositionally biased toward acidic residues. Residues 1386 to 1406 (REGEEEDNGDESTSNIPRGLP) are disordered.

Restricted to the nervous system at all stages of development and highly localized at synapses (at protein level).

It is found in the cytoplasmic vesicle membrane. The protein localises to the synapse. Calcium-binding protein involved in exocytosis of vesicles filled with neurotransmitters and neuropeptides. May specifically mediate the Ca(2+)-dependent exocytosis of large dense-core vesicles (DCVs) and other dense-core vesicles. However, it probably also participates in small clear synaptic vesicles (SVs) exocytosis and it is unclear whether its function is related to Ca(2+) triggering. The sequence is that of Calcium-dependent secretion activator from Drosophila melanogaster (Fruit fly).